We begin with the raw amino-acid sequence, 802 residues long: Oligophrenin-1 (802 aa).

Residues 265-368 (QPTIEGYLYT…WMEAMDGKEP (104 aa)) form the PH domain. In terms of domain architecture, Rho-GAP spans 380-564 (MELNEVGFKF…ILIEHFGKIY (185 aa)). Disordered regions lie at residues 641–663 (QKSG…CQTE) and 682–802 (TKAI…GDES). The segment covering 716–732 (HHKEGDTDCFSKVRPPG) has biased composition (basic and acidic residues). The segment covering 751 to 768 (SSTSQKPESKPETVSSNA) has biased composition (polar residues).

Interacts with HOMER1. Interacts with AMPA receptor complexes. Interacts with SH3GL2 (endophilin-A1). Interacts (via C-terminus) with NR1D1. High expression in brain, particularly in the cerebellum, hippocampus, thalamus, frontal lobes, sensory cortex. Found in the myelin sheaths of peripheral nerves, chromaffin cells within the adrenal medulla, and in extra-adrenal chromaffin cells associated with celiac ganglia.

The protein localises to the postsynapse. The protein resides in the presynapse. Its subcellular location is the cell projection. It is found in the axon. It localises to the dendritic spine. The protein localises to the dendrite. The protein resides in the cytoplasm. Its function is as follows. Stimulates GTP hydrolysis of members of the Rho family. Its action on RHOA activity and signaling is implicated in growth and stabilization of dendritic spines, and therefore in synaptic function, in hippocampal neurons. Critical for the stabilization of AMPA receptors at postsynaptic sites. Critical for the regulation of synaptic vesicle endocytosis at pre-synaptic terminals. Required for the localization of NR1D1 to dendrites, can suppress its repressor activity and protect it from proteasomal degradation. The protein is Oligophrenin-1 (Ophn1) of Rattus norvegicus (Rat).